Reading from the N-terminus, the 501-residue chain is ATP synthase subunit alpha (501 aa).

Residue 169–176 coordinates ATP; it reads GDRQTGKT.

This sequence belongs to the ATPase alpha/beta chains family. F-type ATPases have 2 components, CF(1) - the catalytic core - and CF(0) - the membrane proton channel. CF(1) has five subunits: alpha(3), beta(3), gamma(1), delta(1), epsilon(1). CF(0) has three main subunits: a(1), b(2) and c(9-12). The alpha and beta chains form an alternating ring which encloses part of the gamma chain. CF(1) is attached to CF(0) by a central stalk formed by the gamma and epsilon chains, while a peripheral stalk is formed by the delta and b chains.

Its subcellular location is the cell inner membrane. The catalysed reaction is ATP + H2O + 4 H(+)(in) = ADP + phosphate + 5 H(+)(out). Functionally, produces ATP from ADP in the presence of a proton gradient across the membrane. The alpha chain is a regulatory subunit. The chain is ATP synthase subunit alpha from Campylobacter jejuni subsp. jejuni serotype O:23/36 (strain 81-176).